We begin with the raw amino-acid sequence, 372 residues long: Ubl carboxyl-terminal hydrolase 18 (372 aa).

The interval 19 to 45 is disordered; the sequence is SSQSPADLEEKKEEDSNMKREQPRERP. A compositionally biased stretch (basic and acidic residues) spans 26-45; that stretch reads LEEKKEEDSNMKREQPRERP. Residues 36–51 are mediates interaction with IFNAR2; it reads MKREQPRERPRAWDYP. The interval 51-112 is mediates interaction with STAT2; it reads PHGLVGLHNI…MLLLLEKMQD (62 aa). One can recognise a USP domain in the interval 55–370; sequence VGLHNIGQTC…TAYLLVYMKM (316 aa). Cysteine 64 acts as the Nucleophile in catalysis. The interval 303–312 is mediates interaction with STAT2 and necessary for the negative regulation of the type I IFN signaling pathway; it reads ELFAVIAHVG. The tract at residues 313–372 is mediates interaction with IFNAR2; the sequence is MADSGHYCVYIRNAVDGKWFCFNDSNICLVSWEDIQCTYGNPNYHWQETAYLLVYMKMEC. The Proton acceptor role is filled by histidine 318.

Belongs to the peptidase C19 family. Interacts with STAT2; the interaction is direct. Interacts with IFNAR2; indirectly via STAT2, it negatively regulates the assembly of the ternary interferon-IFNAR1-IFNAR2 complex and inhibits type I interferon signaling. Interacts with STING1. Interacts with USP20.

It localises to the cytoplasm. The protein resides in the nucleus. It carries out the reaction Thiol-dependent hydrolysis of ester, thioester, amide, peptide and isopeptide bonds formed by the C-terminal Gly of ubiquitin (a 76-residue protein attached to proteins as an intracellular targeting signal).. Functionally, interferon-induced ISG15-specific protease that plays a crucial role for maintaining a proper balance of ISG15-conjugated proteins in cells. Regulates protein ISGylation by efficiently cleaving ISG15 conjugates linked via isopeptide bonds. Regulates T-cell activation and T-helper 17 (Th17) cell differentiation by deubiquitinating TAK1, likely to keep TAK1-TAB complexes in steady conditions. In turn, restricts activation of NF-kappa-B, NFAT, and JNK as well as expression of IL2 in T-cells after TCR activation. Acts as a molecular adapter with USP20 to promote innate antiviral response through deubiquitinating STING1. Involved also in the negative regulation of the inflammatory response triggered by type I interferon. Upon recruitment by STAT2 to the type I interferon receptor subunit IFNAR2 interferes with the assembly of the ternary interferon-IFNAR1-IFNAR2 complex and acts as a negative regulator of the type I interferon signaling pathway. In terms of biological role, has enzymatic activity similar to isoform 1 and interferes with type I interferon signaling. Major deISGylation enzyme for nuclear proteins. The polypeptide is Ubl carboxyl-terminal hydrolase 18 (USP18) (Homo sapiens (Human)).